Here is a 209-residue protein sequence, read N- to C-terminus: Large ribosomal subunit protein uL3 (209 aa).

At Gln150 the chain carries N5-methylglutamine.

This sequence belongs to the universal ribosomal protein uL3 family. As to quaternary structure, part of the 50S ribosomal subunit. Forms a cluster with proteins L14 and L19. Post-translationally, methylated by PrmB.

Functionally, one of the primary rRNA binding proteins, it binds directly near the 3'-end of the 23S rRNA, where it nucleates assembly of the 50S subunit. In Aliivibrio salmonicida (strain LFI1238) (Vibrio salmonicida (strain LFI1238)), this protein is Large ribosomal subunit protein uL3.